Consider the following 1475-residue polypeptide: Mediator of RNA polymerase II transcription subunit 1.1 (1475 aa).

3 disordered regions span residues 579–600 (STIG…LTSM), 645–894 (GLAS…KMRE), and 908–1475 (PDVE…IDDE). Positions 655–666 (PVAAAAAAPGGP) are enriched in low complexity. A compositionally biased stretch (polar residues) spans 755–766 (QRSSSEQHNPNP). Residues 767-800 (HQMSQYQMQQYQQNQQFRMHQMQQQQQQQFQMQS) show a composition bias toward low complexity. The segment covering 810–819 (TDEDSDEECD) has biased composition (acidic residues). Residues 829–838 (STSSRMSSVP) show a composition bias toward low complexity. Over residues 869-880 (TPSPLSAPPKPF) the composition is skewed to pro residues. The segment covering 915–929 (QQLSSSSSSSQAEAS) has biased composition (low complexity). Residues 941-952 (PPKPSSSSAPPP) are compositionally biased toward pro residues. Low complexity-rich tracts occupy residues 969 to 989 (QQEQ…SELA) and 1037 to 1049 (QKPT…STSS). Composition is skewed to basic and acidic residues over residues 1052 to 1070 (PPKK…EKLI), 1080 to 1148 (VVDD…EKEP), and 1155 to 1180 (EKKD…KEYS). Residues 1098 to 1135 (DRDRDEDREKVRDKEDKAQREKDKKEKERERRRQRDRD) are a coiled coil. The span at 1181–1193 (KASTTSLIPTLSL) shows a compositional bias: polar residues. Residues 1199-1215 (PKKDTVEEEKKDVKEEA) show a composition bias toward basic and acidic residues. Residues 1242–1252 (APVAPAVQQQQ) show a composition bias toward low complexity. The segment covering 1281-1291 (PLQPPPPPQMT) has biased composition (pro residues). The span at 1308-1317 (PGSSRPSGNR) shows a compositional bias: polar residues. Composition is skewed to pro residues over residues 1320-1334 (PLPP…PPPD) and 1425-1440 (PPAP…PKDP).

It belongs to the Mediator complex subunit 1 family. Component of the Mediator complex.

Its subcellular location is the nucleus. Functionally, component of the Mediator complex, a coactivator involved in the regulated transcription of nearly all RNA polymerase II-dependent genes. Mediator functions as a bridge to convey information from gene-specific regulatory proteins to the basal RNA polymerase II transcription machinery. Mediator is recruited to promoters by direct interactions with regulatory proteins and serves as a scaffold for the assembly of a functional preinitiation complex with RNA polymerase II and the general transcription factors. The polypeptide is Mediator of RNA polymerase II transcription subunit 1.1 (sop-3) (Caenorhabditis elegans).